The primary structure comprises 1435 residues: MGARASVLSGGELDRWEKIRLRPGGKKKYKLKHIVWASRELERFAVNPGLLETSEGCRQILGQLQPSLQTGSEELRSLYNTVATLYCVHQRIEIKDTKEALDKIEEEQNKSKKKAQQAAADTGHSNQVSQNYPIVQNIQGQMVHQAISPRTLNAWVKVVEEKAFSPEVIPMFSALSEGATPQDLNTMLNTVGGHQAAMQMLKETINEEAAEWDRVHPVHAGPIAPGQMREPRGSDIAGTTSTLQEQIGWMTNNPPIPVGEIYKRWIILGLNKIVRMYSPTSILDIRQGPKEPFRDYVDRFYKTLRAEQASQEVKNWMTETLLVQNANPDCKTILKALGPAATLEEMMTACQGVGGPGHKARVLAEAMSQVTNSATIMMQRGNFRNQRKIVKCFNCGKEGHTARNCRAPRKKGCWKCGKEGHQMKDCTERQANFLREDLAFLQGKAREFSSEQTRANSPTRRELQVWGRDNNSPSEAGADRQGTVSFNFPQVTLWQRPLVTIKIGGQLKEALLDTGADDTVLEEMSLPGRWKPKMIGGIGGFIKVRQYDQILIEICGHKAIGTVLVGPTPVNIIGRNLLTQIGCTLNFPISPIETVPVKLKPGMDGPKVKQWPLTEEKIKALVEICTEMEKEGKISKIGPENPYNTPVFAIKKKDSTKWRKLVDFRELNKRTQDFWEVQLGIPHPAGLKKKKSVTVLDVGDAYFSVPLDEDFRKYTAFTIPSINNETPGIRYQYNVLPQGWKGSPAIFQSSMTKILEPFRKQNPDIVIYQYMDDLYVGSDLEIGQHRTKIEELRQHLLRWGLTTPDKKHQKEPPFLWMGYELHPDKWTVQPIVLPEKDSWTVNDIQKLVGKLNWASQIYPGIKVRQLCKLLRGTKALTEVIPLTEEAELELAENREILKEPVHGVYYDPSKDLIAEIQKQGQGQWTYQIYQEPFKNLKTGKYARMRGAHTNDVKQLTEAVQKITTESIVIWGKTPKFKLPIQKETWETWWTEYWQATWIPEWEFVNTPPLVKLWYQLEKEPIVGAETFYVDGAANRETKLGKAGYVTNRGRQKVVTLTDTTNQKTELQAIYLALQDSGLEVNIVTDSQYALGIIQAQPDQSESELVNQIIEQLIKKEKVYLAWVPAHKGIGGNEQVDKLVSAGIRKVLFLDGIDKAQDEHEKYHSNWRAMASDFNLPPVVAKEIVASCDKCQLKGEAMHGQVDCSPGIWQLDCTHLEGKVILVAVHVASGYIEAEVIPAETGQETAYFLLKLAGRWPVKTIHTDNGSNFTGATVRAACWWAGIKQEFGIPYNPQSQGVVESMNKELKKIIGQVRDQAEHLKTAVQMAVFIHNFKRKGGIGGYSAGERIVDIIATDIQTKELQKQITKIQNFRVYYRDSRNPLWKGPAKLLWKGEGAVVIQDNSDIKVVPRRKAKIIRDYGKQMAGDDCVASRQDED.

Glycine 2 carries N-myristoyl glycine; by host lipidation. The interval 7–31 is interaction with Gp41; sequence VLSGGELDRWEKIRLRPGGKKKYKL. An interaction with host CALM1 region spans residues 8–43; it reads LSGGELDRWEKIRLRPGGKKKYKLKHIVWASRELER. The interval 12 to 19 is interaction with host AP3D1; the sequence is ELDRWEKI. The interval 14 to 33 is interaction with membrane phosphatidylinositol 4,5-bisphosphate and RNA; it reads DRWEKIRLRPGGKKKYKLKH. The Nuclear export signal signature appears at 16 to 22; that stretch reads WEKIRLR. The Nuclear localization signal signature appears at 26–32; it reads KKKYKLK. The tract at residues 73 to 77 is interaction with membrane phosphatidylinositol 4,5-bisphosphate; that stretch reads EELRS. Residues 106-128 form a disordered region; it reads EEQNKSKKKAQQAAADTGHSNQV. The residue at position 132 (tyrosine 132) is a Phosphotyrosine; by host. Positions 189 to 227 are interaction with host PPIA/CYPA and NUP153; sequence NTVGGHQAAMQMLKETINEEAAEWDRVHPVHAGPIAPGQ. The PPIA/CYPA-binding loop stretch occupies residues 217-225; sequence PVHAGPIAP. Residues 277–363 are dimerization/Multimerization of capsid protein p24; the sequence is YSPTSILDIR…GGPGHKARVL (87 aa). 2 CCHC-type zinc fingers span residues 390 to 407 and 411 to 428; these read VKCF…NCRA and KGCW…DCTE. Positions 448 to 481 are disordered; sequence FSSEQTRANSPTRRELQVWGRDNNSPSEAGADRQ. A dimerization of protease region spans residues 489 to 493; that stretch reads PQVTL. The Peptidase A2 domain occupies 508-577; it reads KEALLDTGAD…TPVNIIGRNL (70 aa). Aspartate 513 acts as the For protease activity; shared with dimeric partner in catalysis. Dimerization of protease stretches follow at residues 537 to 543 and 576 to 588; these read GIGGFIK and NLLT…LNFP. Residues 631-821 enclose the Reverse transcriptase domain; that stretch reads EGKISKIGPE…PPFLWMGYEL (191 aa). The Mg(2+) site is built by aspartate 697, aspartate 772, and aspartate 773. The RT 'primer grip' stretch occupies residues 814–822; it reads FLWMGYELH. Residues 985–1001 carry the Tryptophan repeat motif motif; that stretch reads WETWWTEYWQATWIPEW. The region spanning 1021-1144 is the RNase H type-1 domain; sequence IVGAETFYVD…VDKLVSAGIR (124 aa). Aspartate 1030, glutamate 1065, aspartate 1085, and aspartate 1136 together coordinate Mg(2+). The Integrase-type zinc-finger motif lies at 1150–1191; it reads DGIDKAQDEHEKYHSNWRAMASDFNLPPVVAKEIVASCDKCQ. Residues histidine 1159, histidine 1163, cysteine 1187, and cysteine 1190 each coordinate Zn(2+). In terms of domain architecture, Integrase catalytic spans 1201–1351; the sequence is VDCSPGIWQL…SAGERIVDII (151 aa). Residues aspartate 1211, aspartate 1263, and glutamate 1299 each contribute to the Mg(2+) site. Residues 1370 to 1417 constitute a DNA-binding region (integrase-type); it reads FRVYYRDSRNPLWKGPAKLLWKGEGAVVIQDNSDIKVVPRRKAKIIRD.

As to quaternary structure, homotrimer; further assembles as hexamers of trimers. Interacts with gp41 (via C-terminus). Interacts with host CALM1; this interaction induces a conformational change in the Matrix protein, triggering exposure of the myristate group. Interacts with host AP3D1; this interaction allows the polyprotein trafficking to multivesicular bodies during virus assembly. Part of the pre-integration complex (PIC) which is composed of viral genome, matrix protein, Vpr and integrase. Homodimer; the homodimer further multimerizes as homohexamers or homopentamers. Interacts with human PPIA/CYPA; this interaction stabilizes the capsid. Interacts with human NUP153. Interacts with host PDZD8; this interaction stabilizes the capsid. Interacts with monkey TRIM5; this interaction destabilizes the capsid. In terms of assembly, homodimer, whose active site consists of two apposed aspartic acid residues. As to quaternary structure, heterodimer of p66 RT and p51 RT (RT p66/p51). Heterodimerization of RT is essential for DNA polymerase activity. The overall folding of the subdomains is similar in p66 RT and p51 RT but the spatial arrangements of the subdomains are dramatically different. Homotetramer; may further associate as a homohexadecamer. Part of the pre-integration complex (PIC) which is composed of viral genome, matrix protein, Vpr and integrase. Interacts with human SMARCB1/INI1 and human PSIP1/LEDGF isoform 1. Interacts with human KPNA3; this interaction might play a role in nuclear import of the pre-. integration complex. Interacts with human NUP153; this interaction might play a role in nuclear import of the pre-integration complex. Requires Mg(2+) as cofactor. Post-translationally, specific enzymatic cleavages by the viral protease yield mature proteins. The protease is released by autocatalytic cleavage. The polyprotein is cleaved during and after budding, this process is termed maturation. Proteolytic cleavage of p66 RT removes the RNase H domain to yield the p51 RT subunit. Nucleocapsid protein p7 might be further cleaved after virus entry. Tyrosine phosphorylated presumably in the virion by a host kinase. Phosphorylation is apparently not a major regulator of membrane association. In terms of processing, phosphorylated possibly by host MAPK1; this phosphorylation is necessary for Pin1-mediated virion uncoating. Post-translationally, methylated by host PRMT6, impairing its function by reducing RNA annealing and the initiation of reverse transcription.

It is found in the host cell membrane. Its subcellular location is the host endosome. It localises to the host multivesicular body. The protein resides in the virion membrane. The protein localises to the host nucleus. It is found in the host cytoplasm. Its subcellular location is the virion. The catalysed reaction is Specific for a P1 residue that is hydrophobic, and P1' variable, but often Pro.. It carries out the reaction Endohydrolysis of RNA in RNA/DNA hybrids. Three different cleavage modes: 1. sequence-specific internal cleavage of RNA. Human immunodeficiency virus type 1 and Moloney murine leukemia virus enzymes prefer to cleave the RNA strand one nucleotide away from the RNA-DNA junction. 2. RNA 5'-end directed cleavage 13-19 nucleotides from the RNA end. 3. DNA 3'-end directed cleavage 15-20 nucleotides away from the primer terminus.. It catalyses the reaction 3'-end directed exonucleolytic cleavage of viral RNA-DNA hybrid.. The enzyme catalyses DNA(n) + a 2'-deoxyribonucleoside 5'-triphosphate = DNA(n+1) + diphosphate. Protease: The viral protease is inhibited by many synthetic protease inhibitors (PIs), such as amprenavir, atazanavir, indinavir, loprinavir, nelfinavir, ritonavir and saquinavir. Use of protease inhibitors in tritherapy regimens permit more ambitious therapeutic strategies. Reverse transcriptase/ribonuclease H: RT can be inhibited either by nucleoside RT inhibitors (NRTIs) or by non nucleoside RT inhibitors (NNRTIs). NRTIs act as chain terminators, whereas NNRTIs inhibit DNA polymerization by binding a small hydrophobic pocket near the RT active site and inducing an allosteric change in this region. Classical NRTIs are abacavir, adefovir (PMEA), didanosine (ddI), lamivudine (3TC), stavudine (d4T), tenofovir (PMPA), zalcitabine (ddC), and zidovudine (AZT). Classical NNRTIs are atevirdine (BHAP U-87201E), delavirdine, efavirenz (DMP-266), emivirine (I-EBU), and nevirapine (BI-RG-587). The tritherapies used as a basic effective treatment of AIDS associate two NRTIs and one NNRTI. Its function is as follows. Mediates, with Gag polyprotein, the essential events in virion assembly, including binding the plasma membrane, making the protein-protein interactions necessary to create spherical particles, recruiting the viral Env proteins, and packaging the genomic RNA via direct interactions with the RNA packaging sequence (Psi). Gag-Pol polyprotein may regulate its own translation, by the binding genomic RNA in the 5'-UTR. At low concentration, the polyprotein would promote translation, whereas at high concentration, the polyprotein would encapsidate genomic RNA and then shut off translation. In terms of biological role, targets the polyprotein to the plasma membrane via a multipartite membrane-binding signal, that includes its myristoylated N-terminus. Matrix protein is part of the pre-integration complex. Implicated in the release from host cell mediated by Vpu. Binds to RNA. Forms the conical core that encapsulates the genomic RNA-nucleocapsid complex in the virion. Most core are conical, with only 7% tubular. The core is constituted by capsid protein hexamer subunits. The core is disassembled soon after virion entry. Host restriction factors such as monkey TRIM5-alpha or TRIMCyp bind retroviral capsids and cause premature capsid disassembly, leading to blocks in reverse transcription. Capsid restriction by TRIM5 is one of the factors which restricts HIV-1 to the human species. Host PIN1 apparently facilitates the virion uncoating. On the other hand, interactions with PDZD8 or CYPA stabilize the capsid. Functionally, encapsulates and protects viral dimeric unspliced genomic RNA (gRNA). Binds these RNAs through its zinc fingers. Acts as a nucleic acid chaperone which is involved in rearangement of nucleic acid secondary structure during gRNA retrotranscription. Also facilitates template switch leading to recombination. As part of the polyprotein, participates in gRNA dimerization, packaging, tRNA incorporation and virion assembly. Its function is as follows. Aspartyl protease that mediates proteolytic cleavages of Gag and Gag-Pol polyproteins during or shortly after the release of the virion from the plasma membrane. Cleavages take place as an ordered, step-wise cascade to yield mature proteins. This process is called maturation. Displays maximal activity during the budding process just prior to particle release from the cell. Also cleaves Nef and Vif, probably concomitantly with viral structural proteins on maturation of virus particles. Hydrolyzes host EIF4GI and PABP1 in order to shut off the capped cellular mRNA translation. The resulting inhibition of cellular protein synthesis serves to ensure maximal viral gene expression and to evade host immune response. Also mediates cleavage of host YTHDF3. Mediates cleavage of host CARD8, thereby activating the CARD8 inflammasome, leading to the clearance of latent HIV-1 in patient CD4(+) T-cells after viral reactivation; in contrast, HIV-1 can evade CARD8-sensing when its protease remains inactive in infected cells prior to viral budding. In terms of biological role, multifunctional enzyme that converts the viral RNA genome into dsDNA in the cytoplasm, shortly after virus entry into the cell. This enzyme displays a DNA polymerase activity that can copy either DNA or RNA templates, and a ribonuclease H (RNase H) activity that cleaves the RNA strand of RNA-DNA heteroduplexes in a partially processive 3' to 5' endonucleasic mode. Conversion of viral genomic RNA into dsDNA requires many steps. A tRNA(3)-Lys binds to the primer-binding site (PBS) situated at the 5'-end of the viral RNA. RT uses the 3' end of the tRNA primer to perform a short round of RNA-dependent minus-strand DNA synthesis. The reading proceeds through the U5 region and ends after the repeated (R) region which is present at both ends of viral RNA. The portion of the RNA-DNA heteroduplex is digested by the RNase H, resulting in a ssDNA product attached to the tRNA primer. This ssDNA/tRNA hybridizes with the identical R region situated at the 3' end of viral RNA. This template exchange, known as minus-strand DNA strong stop transfer, can be either intra- or intermolecular. RT uses the 3' end of this newly synthesized short ssDNA to perform the RNA-dependent minus-strand DNA synthesis of the whole template. RNase H digests the RNA template except for two polypurine tracts (PPTs) situated at the 5'-end and near the center of the genome. It is not clear if both polymerase and RNase H activities are simultaneous. RNase H probably can proceed both in a polymerase-dependent (RNA cut into small fragments by the same RT performing DNA synthesis) and a polymerase-independent mode (cleavage of remaining RNA fragments by free RTs). Secondly, RT performs DNA-directed plus-strand DNA synthesis using the PPTs that have not been removed by RNase H as primers. PPTs and tRNA primers are then removed by RNase H. The 3' and 5' ssDNA PBS regions hybridize to form a circular dsDNA intermediate. Strand displacement synthesis by RT to the PBS and PPT ends produces a blunt ended, linear dsDNA copy of the viral genome that includes long terminal repeats (LTRs) at both ends. Catalyzes viral DNA integration into the host chromosome, by performing a series of DNA cutting and joining reactions. This enzyme activity takes place after virion entry into a cell and reverse transcription of the RNA genome in dsDNA. The first step in the integration process is 3' processing. This step requires a complex comprising the viral genome, matrix protein, Vpr and integrase. This complex is called the pre-integration complex (PIC). The integrase protein removes 2 nucleotides from each 3' end of the viral DNA, leaving recessed CA OH's at the 3' ends. In the second step, the PIC enters cell nucleus. This process is mediated through integrase and Vpr proteins, and allows the virus to infect a non dividing cell. This ability to enter the nucleus is specific of lentiviruses, other retroviruses cannot and rely on cell division to access cell chromosomes. In the third step, termed strand transfer, the integrase protein joins the previously processed 3' ends to the 5' ends of strands of target cellular DNA at the site of integration. The 5'-ends are produced by integrase-catalyzed staggered cuts, 5 bp apart. A Y-shaped, gapped, recombination intermediate results, with the 5'-ends of the viral DNA strands and the 3' ends of target DNA strands remaining unjoined, flanking a gap of 5 bp. The last step is viral DNA integration into host chromosome. This involves host DNA repair synthesis in which the 5 bp gaps between the unjoined strands are filled in and then ligated. Since this process occurs at both cuts flanking the HIV genome, a 5 bp duplication of host DNA is produced at the ends of HIV-1 integration. Alternatively, Integrase may catalyze the excision of viral DNA just after strand transfer, this is termed disintegration. The polypeptide is Gag-Pol polyprotein (gag-pol) (Human immunodeficiency virus type 1 group M subtype B (isolate HXB2) (HIV-1)).